Here is a 761-residue protein sequence, read N- to C-terminus: Ribonucleoside-diphosphate reductase 1 subunit alpha (761 aa).

One can recognise an ATP-cone domain in the interval Leu-5 to Gly-95. Residues Lys-9, Glu-15 to Lys-21, Thr-55, and Lys-91 each bind ATP. Position 209 (Thr-209) interacts with GDP. Cys-225 and Cys-462 are oxidised to a cystine. Residues Asp-232–Leu-234, Arg-262, and Arg-269 each bind dTTP. A GDP-binding site is contributed by Asn-437. Asn-437 acts as the Proton acceptor in catalysis. Cys-439 serves as the catalytic Cysteine radical intermediate. GDP is bound by residues Glu-441 and Glu-623–Ser-625. The active-site Proton acceptor is the Glu-441.

This sequence belongs to the ribonucleoside diphosphate reductase large chain family. As to quaternary structure, tetramer of two alpha (R1) and two beta (R2) subunits. The B1 protein is a dimer of alpha subunits. A radical transfer pathway occurs between 'Tyr-122' of R2 and R1.

It carries out the reaction a 2'-deoxyribonucleoside 5'-diphosphate + [thioredoxin]-disulfide + H2O = a ribonucleoside 5'-diphosphate + [thioredoxin]-dithiol. Its activity is regulated as follows. Under complex allosteric control mediated by deoxynucleoside triphosphates and ATP binding to separate specificity and activation sites on the alpha subunit. The type of nucleotide bound at the specificity site determines substrate preference. It seems probable that ATP makes the enzyme reduce CDP and UDP, dGTP favors ADP reduction and dTTP favors GDP reduction. Stimulated by ATP and inhibited by dATP binding to the activity site. Its function is as follows. Provides the precursors necessary for DNA synthesis. Catalyzes the biosynthesis of deoxyribonucleotides from the corresponding ribonucleotides. R1 contains the binding sites for both substrates and allosteric effectors and carries out the actual reduction of the ribonucleotide. The polypeptide is Ribonucleoside-diphosphate reductase 1 subunit alpha (nrdA) (Salmonella typhimurium (strain LT2 / SGSC1412 / ATCC 700720)).